A 361-amino-acid polypeptide reads, in one-letter code: MTPIPSDRLDAILARHEFVTAQLADGSADAESIVQLSRELSELDGVVAAIRHYRAAEANLAGIRALIDEPGGDPEMRALAAEEKPEAEEALEQAHRALQLMLLPKDAADEKSAILEIRAGTGGDEAALFAGDLFRMYAKYAESKGWRVEVISESEGTVGGYREVVAEVKGRSVFSRLKFESGAHRVQRVPDTETQGRIHTSAATVAVLPEAEEVDIAINEADLKIDTMRAQGAGGQHVNKTESAIRITHMPTGVVVFVQEERSQHKNRARAMALLRSKLFDAERTAKDSARAADRKAQVGSGDRSERIRTYNFPQGRVTDHRINLTLYKLEEVMAGPALDEVIDALVTEHQAELLAAEGMA.

The residue at position 236 (Q236) is an N5-methylglutamine. Residues 285-309 (TAKDSARAADRKAQVGSGDRSERIR) show a composition bias toward basic and acidic residues. Positions 285-313 (TAKDSARAADRKAQVGSGDRSERIRTYNF) are disordered.

This sequence belongs to the prokaryotic/mitochondrial release factor family. In terms of processing, methylated by PrmC. Methylation increases the termination efficiency of RF1.

The protein localises to the cytoplasm. Functionally, peptide chain release factor 1 directs the termination of translation in response to the peptide chain termination codons UAG and UAA. In Methylorubrum populi (strain ATCC BAA-705 / NCIMB 13946 / BJ001) (Methylobacterium populi), this protein is Peptide chain release factor 1.